The following is a 377-amino-acid chain: O-phospho-L-seryl-tRNA:Cys-tRNA synthase (377 aa).

Residues 82–83 (AR), Asn189, and 212–214 (SGH) each bind pyridoxal 5'-phosphate. Lys215 carries the N6-(pyridoxal phosphate)lysine modification.

It belongs to the SepCysS family. In terms of assembly, homodimer. Interacts with SepRS. Requires pyridoxal 5'-phosphate as cofactor.

It catalyses the reaction O-phospho-L-seryl-tRNA(Cys) + hydrogen sulfide + H(+) = L-cysteinyl-tRNA(Cys) + phosphate. In terms of biological role, converts O-phospho-L-seryl-tRNA(Cys) (Sep-tRNA(Cys)) to L-cysteinyl-tRNA(Cys) (Cys-tRNA(Cys)). The polypeptide is O-phospho-L-seryl-tRNA:Cys-tRNA synthase (Methanocaldococcus jannaschii (strain ATCC 43067 / DSM 2661 / JAL-1 / JCM 10045 / NBRC 100440) (Methanococcus jannaschii)).